A 396-amino-acid chain; its full sequence is Cell adhesion molecule 3 (396 aa).

The signal sequence occupies residues 1-22; sequence MGAPSALPLLLLLACSWAPGGA. The Ig-like V-type domain occupies 23-124; it reads NLSQDDSQPW…VRTAKSLVTV (102 aa). The Extracellular portion of the chain corresponds to 23–328; it reads NLSQDDSQPW…PVPSSSSTYH (306 aa). 3 disulfides stabilise this stretch: C48–C108, C150–C207, and C252–C297. Ig-like C2-type domains lie at 128–226 and 231–313; these read PQKP…QRIE and PTAM…FTLN. N288 is a glycosylation site (N-linked (GlcNAc...) asparagine). The helical transmembrane segment at 329 to 349 threads the bilayer; that stretch reads AIIGGIVAFIVFLLLILLIFL. Residues 350-396 are Cytoplasmic-facing; the sequence is GHYLIRHKGTYLTHEAKGSDDAPDADTAIINAEGGQSGGDDKKEYFI. The interval 365-396 is disordered; it reads AKGSDDAPDADTAIINAEGGQSGGDDKKEYFI. S386 carries the post-translational modification Phosphoserine.

The protein belongs to the nectin family. In terms of assembly, homodimer. Can form trans-heterodimers with NECTIN3. Interacts with EPB41L1, DLG3, PALS2 and CASK.

Its subcellular location is the cell membrane. It is found in the cell junction. In terms of biological role, involved in cell-cell adhesion. Has both calcium-independent homophilic cell-cell adhesion activity and calcium-independent heterophilic cell-cell adhesion activity with IGSF4, NECTIN1 and NECTIN3. Interaction with EPB41L1 may regulate structure or function of cell-cell junctions. This Rattus norvegicus (Rat) protein is Cell adhesion molecule 3 (Cadm3).